Consider the following 236-residue polypeptide: 2-phospho-L-lactate guanylyltransferase (236 aa).

The protein belongs to the CofC family. Homodimer.

It carries out the reaction (2S)-2-phospholactate + GTP + H(+) = (2S)-lactyl-2-diphospho-5'-guanosine + diphosphate. It participates in cofactor biosynthesis; coenzyme F420 biosynthesis. Guanylyltransferase that catalyzes the activation of (2S)-2-phospholactate (2-PL) as (2S)-lactyl-2-diphospho-5'-guanosine, via the condensation of 2-PL with GTP. It is involved in the biosynthesis of coenzyme F420, a hydride carrier cofactor. This is 2-phospho-L-lactate guanylyltransferase from Natrialba magadii (strain ATCC 43099 / DSM 3394 / CCM 3739 / CIP 104546 / IAM 13178 / JCM 8861 / NBRC 102185 / NCIMB 2190 / MS3) (Natronobacterium magadii).